A 282-amino-acid polypeptide reads, in one-letter code: Glutamate racemase (282 aa).

Substrate contacts are provided by residues 13 to 14 (DS) and 45 to 46 (YG). The Proton donor/acceptor role is filled by cysteine 76. 77-78 (NT) provides a ligand contact to substrate. The active-site Proton donor/acceptor is cysteine 186. 187–188 (TH) contacts substrate.

The protein belongs to the aspartate/glutamate racemases family.

The catalysed reaction is L-glutamate = D-glutamate. It participates in cell wall biogenesis; peptidoglycan biosynthesis. Provides the (R)-glutamate required for cell wall biosynthesis. The sequence is that of Glutamate racemase from Ralstonia pickettii (strain 12J).